The following is a 42-amino-acid chain: Cytochrome b559 subunit beta (42 aa).

A helical transmembrane segment spans residues 17 to 33 (WLTIHALAVPTVFFLGA). Position 21 (His21) interacts with heme.

It belongs to the PsbE/PsbF family. As to quaternary structure, heterodimer of an alpha subunit and a beta subunit. PSII is composed of 1 copy each of membrane proteins PsbA, PsbB, PsbC, PsbD, PsbE, PsbF, PsbH, PsbI, PsbJ, PsbK, PsbL, PsbM, PsbT, PsbX, PsbY, PsbZ, Psb30/Ycf12, at least 3 peripheral proteins of the oxygen-evolving complex and a large number of cofactors. It forms dimeric complexes. It depends on heme b as a cofactor.

It is found in the plastid. The protein resides in the chloroplast thylakoid membrane. This b-type cytochrome is tightly associated with the reaction center of photosystem II (PSII). PSII is a light-driven water:plastoquinone oxidoreductase that uses light energy to abstract electrons from H(2)O, generating O(2) and a proton gradient subsequently used for ATP formation. It consists of a core antenna complex that captures photons, and an electron transfer chain that converts photonic excitation into a charge separation. The polypeptide is Cytochrome b559 subunit beta (Emiliania huxleyi (Coccolithophore)).